A 483-amino-acid chain; its full sequence is Betaine aldehyde dehydrogenase (483 aa).

The K(+) site is built by Ile-27 and Asp-93. Gly-149–Trp-151 contributes to the NAD(+) binding site. Lys-161 (charge relay system) is an active-site residue. NAD(+) is bound at residue Lys-175–Glu-178. Val-179 contacts K(+). Residue Ser-228–Thr-231 coordinates NAD(+). Position 243 (Val-243) interacts with K(+). Glu-249 acts as the Proton acceptor in catalysis. 3 residues coordinate NAD(+): Gly-251, Cys-283, and Glu-380. The Nucleophile role is filled by Cys-283. Cys-283 bears the Cysteine sulfenic acid (-SOH) mark. Residues Lys-450 and Gly-453 each coordinate K(+). Glu-457 (charge relay system) is an active-site residue.

The protein belongs to the aldehyde dehydrogenase family. In terms of assembly, dimer of dimers. K(+) is required as a cofactor.

It catalyses the reaction betaine aldehyde + NAD(+) + H2O = glycine betaine + NADH + 2 H(+). The protein operates within amine and polyamine biosynthesis; betaine biosynthesis via choline pathway; betaine from betaine aldehyde: step 1/1. In terms of biological role, involved in the biosynthesis of the osmoprotectant glycine betaine. Catalyzes the irreversible oxidation of betaine aldehyde to the corresponding acid. This chain is Betaine aldehyde dehydrogenase, found in Cereibacter sphaeroides (strain ATCC 17029 / ATH 2.4.9) (Rhodobacter sphaeroides).